A 360-amino-acid chain; its full sequence is Nucleoporin SEH1 (360 aa).

WD repeat units lie at residues 10 to 49 (DHKD…DWHC), 55 to 96 (THSG…SNDK), 111 to 152 (DSRT…NLSQ), 160 to 210 (SCKL…RKYA), 217 to 258 (SVSD…KELS), and 276 to 315 (NHNS…NWKC).

It belongs to the WD repeat SEC13 family. As to quaternary structure, component of the Nup107-160 subcomplex of the nuclear pore complex (NPC). The Nup107-160 subcomplex includes NUP160, NUP133, NUP107, NUP98, NUP85, NUP43, NUP37, SEH1 and SEC13. Component of the GATOR2 subcomplex, composed of MIOS, SEC13, SEH1L, WDR24 and WDR59. The GATOR2 complex interacts with CASTOR1 and CASTOR2; the interaction is negatively regulated by arginine. The GATOR2 complex interacts with SESN1, SESN2 and SESN3; the interaction is negatively regulated by amino acids.

Its subcellular location is the chromosome. It is found in the centromere. The protein resides in the kinetochore. The protein localises to the nucleus. It localises to the nuclear pore complex. Its subcellular location is the lysosome membrane. The GATOR2 complex is negatively regulated by the upstream amino acid sensors CASTOR1 and SESN2, which sequester the GATOR2 complex in absence of amino acids. In the presence of abundant amino acids, GATOR2 is released from CASTOR1 and SESN2 and activated. Its function is as follows. Component of the Nup107-160 subcomplex of the nuclear pore complex (NPC). The Nup107-160 subcomplex is required for the assembly of a functional NPC. The Nup107-160 subcomplex is also required for normal kinetochore microtubule attachment, mitotic progression and chromosome segregation. This subunit plays a role in recruitment of the Nup107-160 subcomplex to the kinetochore. In terms of biological role, as a component of the GATOR2 complex, functions as an activator of the amino acid-sensing branch of the mTORC1 signaling pathway. The GATOR2 complex indirectly activates mTORC1 through the inhibition of the GATOR1 subcomplex. GATOR2 probably acts as an E3 ubiquitin-protein ligase toward GATOR1. In the presence of abundant amino acids, the GATOR2 complex mediates ubiquitination of the NPRL2 core component of the GATOR1 complex, leading to GATOR1 inactivation. In the absence of amino acids, GATOR2 is inhibited, activating the GATOR1 complex. The chain is Nucleoporin SEH1 (seh1l) from Xenopus tropicalis (Western clawed frog).